The primary structure comprises 442 residues: tRNA-2-methylthio-N(6)-dimethylallyladenosine synthase (442 aa).

The region spanning 6-122 (RKFYIHTFGC…LPVLIAEAGK (117 aa)) is the MTTase N-terminal domain. [4Fe-4S] cluster is bound by residues Cys15, Cys51, Cys85, Cys157, Cys161, and Cys164. One can recognise a Radical SAM core domain in the interval 143–373 (RTQSLTAFVP…IDLQNGISAE (231 aa)). Residues 376–439 (RLAIGSVVEV…SATLIGRAAE (64 aa)) enclose the TRAM domain.

This sequence belongs to the methylthiotransferase family. MiaB subfamily. In terms of assembly, monomer. The cofactor is [4Fe-4S] cluster.

Its subcellular location is the cytoplasm. It catalyses the reaction N(6)-dimethylallyladenosine(37) in tRNA + (sulfur carrier)-SH + AH2 + 2 S-adenosyl-L-methionine = 2-methylsulfanyl-N(6)-dimethylallyladenosine(37) in tRNA + (sulfur carrier)-H + 5'-deoxyadenosine + L-methionine + A + S-adenosyl-L-homocysteine + 2 H(+). Catalyzes the methylthiolation of N6-(dimethylallyl)adenosine (i(6)A), leading to the formation of 2-methylthio-N6-(dimethylallyl)adenosine (ms(2)i(6)A) at position 37 in tRNAs that read codons beginning with uridine. The polypeptide is tRNA-2-methylthio-N(6)-dimethylallyladenosine synthase (Chlorobium limicola (strain DSM 245 / NBRC 103803 / 6330)).